A 1443-amino-acid chain; its full sequence is Lysophospholipase NTE1 (1443 aa).

At 1 to 59 (MEEELAIEDLPRLTGTVSLNNGLLHSIYNETTVFKILRWSLVEIPKYILKLMSKNLEIN) the chain is on the lumenal side. The chain crosses the membrane as a helical span at residues 60–80 (LNVSSILIITLLIAAGILVIV). At 81–1443 (RYKFLTGYSE…RIKMYRRNTM (1363 aa)) the chain is on the cytoplasmic side. A compositionally biased stretch (polar residues) spans 103–118 (ALGQQSTNYPKSTSSG). Disordered regions lie at residues 103–122 (ALGQQSTNYPKSTSSGLFVE) and 199–251 (KYDE…GKMH). The segment covering 210 to 235 (EGEEADEDDEEEEKEVGDDGDDEMDV) has biased composition (acidic residues). A nucleoside 3',5'-cyclic phosphate is bound by residues 619–750 (LYKR…LKSL) and 746–871 (KLKS…VASK). The PNPLA domain occupies 1136 to 1300 (LVLGGGGSRG…LDNLPVMEMK (165 aa)). The short motif at 1140–1145 (GGGSRG) is the GXGXXG element. The GXSXG signature appears at 1167–1171 (GTSIG). The Nucleophile role is filled by serine 1169. Aspartate 1287 (proton acceptor) is an active-site residue. The DGA/G motif lies at 1287-1289 (DGG).

This sequence belongs to the NTE family.

It localises to the endoplasmic reticulum membrane. The enzyme catalyses a 1-acyl-sn-glycero-3-phosphocholine + H2O = sn-glycerol 3-phosphocholine + a fatty acid + H(+). Inhibited by organophosphorus esters. Functionally, intracellular phospholipase B that catalyzes the double deacylation of phosphatidylcholine (PC) to glycerophosphocholine (GroPCho). Plays an important role in membrane lipid homeostasis. Responsible for the rapid PC turnover in response to inositol, elevated temperatures, or when choline is present in the growth medium. The polypeptide is Lysophospholipase NTE1 (NTE1) (Lodderomyces elongisporus (strain ATCC 11503 / CBS 2605 / JCM 1781 / NBRC 1676 / NRRL YB-4239) (Yeast)).